The primary structure comprises 285 residues: UPF0173 metal-dependent hydrolase Pnuc_1524 (285 aa).

It belongs to the UPF0173 family.

The sequence is that of UPF0173 metal-dependent hydrolase Pnuc_1524 from Polynucleobacter asymbioticus (strain DSM 18221 / CIP 109841 / QLW-P1DMWA-1) (Polynucleobacter necessarius subsp. asymbioticus).